The following is a 283-amino-acid chain: Phosphatidylglycerol--prolipoprotein diacylglyceryl transferase (283 aa).

A run of 4 helical transmembrane segments spans residues 20-40, 51-71, 97-117, and 123-143; these read LGPVPIRAYALCIIVGIFVAM, GGNPDLVIDAGIVAVIAGIIG, ITNGGLGIWGAVALGTIAVYF, and GVAFALFADAVAPGIILAQAI. Arg145 contacts a 1,2-diacyl-sn-glycero-3-phospho-(1'-sn-glycerol). A run of 2 helical transmembrane segments spans residues 192-212 and 255-275; these read VHPTFLYEMIWNLVIFAVLLW and INVIVSVVVCAIAVGALFALR.

Belongs to the Lgt family.

It localises to the cell membrane. The catalysed reaction is L-cysteinyl-[prolipoprotein] + a 1,2-diacyl-sn-glycero-3-phospho-(1'-sn-glycerol) = an S-1,2-diacyl-sn-glyceryl-L-cysteinyl-[prolipoprotein] + sn-glycerol 1-phosphate + H(+). Its pathway is protein modification; lipoprotein biosynthesis (diacylglyceryl transfer). Functionally, catalyzes the transfer of the diacylglyceryl group from phosphatidylglycerol to the sulfhydryl group of the N-terminal cysteine of a prolipoprotein, the first step in the formation of mature lipoproteins. The protein is Phosphatidylglycerol--prolipoprotein diacylglyceryl transferase of Corynebacterium diphtheriae (strain ATCC 700971 / NCTC 13129 / Biotype gravis).